The primary structure comprises 139 residues: MSINIRIVTPTGFLWETKAEEILLPSTTAPLIVLPGHINILTGLSPGLLRVKVDSRWKPILISSGAAQILTSDSTNVDVGIMEVEEIKQENFKEAELLLEKANDALNIINPIDIRERIKAGEAKSFAESRVEAFKFLAT.

The protein belongs to the ATPase epsilon chain family. F-type ATPases have 2 components, CF(1) - the catalytic core - and CF(0) - the membrane proton channel. CF(1) has five subunits: alpha(3), beta(3), gamma(1), delta(1), epsilon(1). CF(0) has three main subunits: a, b and c.

Its subcellular location is the plastid. The protein resides in the chloroplast thylakoid membrane. In terms of biological role, produces ATP from ADP in the presence of a proton gradient across the membrane. This Dictyota dichotoma protein is ATP synthase epsilon chain, chloroplastic.